Consider the following 598-residue polypeptide: Elongation factor 4 (598 aa).

The tr-type G domain occupies 5–187 (SHIRNFSIIA…RLVATIPAPT (183 aa)). GTP is bound by residues 17–22 (DHGKST) and 134–137 (NKMD).

Belongs to the TRAFAC class translation factor GTPase superfamily. Classic translation factor GTPase family. LepA subfamily.

It is found in the cell inner membrane. The enzyme catalyses GTP + H2O = GDP + phosphate + H(+). In terms of biological role, required for accurate and efficient protein synthesis under certain stress conditions. May act as a fidelity factor of the translation reaction, by catalyzing a one-codon backward translocation of tRNAs on improperly translocated ribosomes. Back-translocation proceeds from a post-translocation (POST) complex to a pre-translocation (PRE) complex, thus giving elongation factor G a second chance to translocate the tRNAs correctly. Binds to ribosomes in a GTP-dependent manner. This Pseudomonas syringae pv. syringae (strain B728a) protein is Elongation factor 4.